Here is a 138-residue protein sequence, read N- to C-terminus: uncharacterized protein (138 aa).

A disordered region spans residues 74–96; that stretch reads RRRSPSLPARRPPTPREDALEDY. Positions 87 to 96 are enriched in basic and acidic residues; it reads TPREDALEDY.

This is an uncharacterized protein from Orgyia pseudotsugata (Douglas-fir tussock moth).